A 529-amino-acid chain; its full sequence is MAAKRGRNRSPSPDPEGMFAGMVVFMVEIGVQRRRLQIWKQKLVQMGAVIEEDRVTKKVTHVLAMNLEALLHKFGKERLSHFTARLMLYQWLEDSLTSGEKANEDLYVLKIDSEEVDKPKKSLPAISGSEDQSSPQKRTRYSPDAGDFKGVESHSNTQGSPDSPTSCSVPSTSASPGEGIAETPTSPQSESTSVYKPPDLNRNITEIFGKLINIYRALGEDRRSFSYYKAIPVIEKFPTRIESVDQLKHLPGIGKAMRDHIQEIVTTGKLSKLEHFETDEKVRTISLFGEVWGVGPATALKLYEKGHRTLEDLKNEDSLTHAQKLGLKYFDDIKTRIPRQEVQEMEQLLQRVGEETLPGVNIVCGGSYRRGKATCGDLDIVVTHPDGQSHKGFLTKFVKRLKEMNFLREDLIFSTHSEEGTDSGVDTYFGLCTYPGQELRRRIDFKVYPRDIYSFGLIAWTGNDVLNRRLRLLAESKGYRLDDTGLFPATHSSSGNRGARGTASLKLSTEKQVFDFLGFPWLEPHERNL.

The BRCT domain maps to 14-109 (DPEGMFAGMV…EKANEDLYVL (96 aa)). The interval 119 to 199 (PKKSLPAISG…ESTSVYKPPD (81 aa)) is disordered. The span at 153 to 175 (SHSNTQGSPDSPTSCSVPSTSAS) shows a compositional bias: polar residues. Residues 182-193 (ETPTSPQSESTS) are compositionally biased toward low complexity. Residues 213–227 (NIYRALGEDRRSFSY) are DNA-binding. His-260 is an active-site residue. The interval 295–298 (GPAT) is DNA-binding. DCTP contacts are provided by residues Arg-336, 367–370 (SYRR), and 376–379 (GDLD). Positions 370 to 379 (RGKATCGDLD) are involved in primer binding. Positions 377, 379, and 444 each coordinate Mn(2+). The segment at 418–459 (EEGTDSGVDTYFGLCTYPGQELRRRIDFKVYPRDIYSFGLIA) is DNA-binding. Asn-467 is a binding site for dCTP.

The protein belongs to the DNA polymerase type-X family. As to quaternary structure, interacts with the DNA repair proteins XRCC4 and LIG4. Interacts with HSP90-1. It depends on Mn(2+) as a cofactor.

The protein resides in the nucleus. It catalyses the reaction DNA(n) + a 2'-deoxyribonucleoside 5'-triphosphate = DNA(n+1) + diphosphate. Its function is as follows. Repair polymerase involved in base excision repair (BER) and responsible for repair of lesions that give rise to abasic (AP) sites in DNA. Has both DNA polymerase and terminal transferase activities. Has a 5'-deoxyribose-5-phosphate lyase (dRP lyase) activity. Involved in the repair of transposon-induced DNA double strand breaks (DSBs). Involved in repair of UV-B-mediated DNA damage during seedling development through an excision repair mechanism. Involved the repair of DSBs induced by high salinity and DNA cross-linking agent. Functions via the DNA non-homologous end joining (NHEJ) pathway. This chain is DNA polymerase lambda, found in Arabidopsis thaliana (Mouse-ear cress).